The following is a 91-amino-acid chain: UPF0386 protein Caul_4643 (91 aa).

Belongs to the UPF0386 family.

This chain is UPF0386 protein Caul_4643, found in Caulobacter sp. (strain K31).